A 460-amino-acid chain; its full sequence is Argininosuccinate lyase (460 aa).

Belongs to the lyase 1 family. Argininosuccinate lyase subfamily.

The protein localises to the cytoplasm. It carries out the reaction 2-(N(omega)-L-arginino)succinate = fumarate + L-arginine. The protein operates within amino-acid biosynthesis; L-arginine biosynthesis; L-arginine from L-ornithine and carbamoyl phosphate: step 3/3. This Actinobacillus succinogenes (strain ATCC 55618 / DSM 22257 / CCUG 43843 / 130Z) protein is Argininosuccinate lyase.